The primary structure comprises 478 residues: Aspartyl/glutamyl-tRNA(Asn/Gln) amidotransferase subunit B (478 aa).

The protein belongs to the GatB/GatE family. GatB subfamily. As to quaternary structure, heterotrimer of A, B and C subunits.

The enzyme catalyses L-glutamyl-tRNA(Gln) + L-glutamine + ATP + H2O = L-glutaminyl-tRNA(Gln) + L-glutamate + ADP + phosphate + H(+). It catalyses the reaction L-aspartyl-tRNA(Asn) + L-glutamine + ATP + H2O = L-asparaginyl-tRNA(Asn) + L-glutamate + ADP + phosphate + 2 H(+). Allows the formation of correctly charged Asn-tRNA(Asn) or Gln-tRNA(Gln) through the transamidation of misacylated Asp-tRNA(Asn) or Glu-tRNA(Gln) in organisms which lack either or both of asparaginyl-tRNA or glutaminyl-tRNA synthetases. The reaction takes place in the presence of glutamine and ATP through an activated phospho-Asp-tRNA(Asn) or phospho-Glu-tRNA(Gln). This chain is Aspartyl/glutamyl-tRNA(Asn/Gln) amidotransferase subunit B, found in Dichelobacter nodosus (strain VCS1703A).